A 151-amino-acid polypeptide reads, in one-letter code: UPF0178 protein Shal_3046 (151 aa).

Belongs to the UPF0178 family.

The polypeptide is UPF0178 protein Shal_3046 (Shewanella halifaxensis (strain HAW-EB4)).